We begin with the raw amino-acid sequence, 251 residues long: Segregation and condensation protein A (251 aa).

It belongs to the ScpA family. As to quaternary structure, component of a cohesin-like complex composed of ScpA, ScpB and the Smc homodimer, in which ScpA and ScpB bind to the head domain of Smc. The presence of the three proteins is required for the association of the complex with DNA.

It localises to the cytoplasm. In terms of biological role, participates in chromosomal partition during cell division. May act via the formation of a condensin-like complex containing Smc and ScpB that pull DNA away from mid-cell into both cell halves. This Bacillus velezensis (strain DSM 23117 / BGSC 10A6 / LMG 26770 / FZB42) (Bacillus amyloliquefaciens subsp. plantarum) protein is Segregation and condensation protein A.